Here is a 145-residue protein sequence, read N- to C-terminus: Bacilliredoxin SH1401 (145 aa).

This sequence belongs to the bacilliredoxin family.

In Staphylococcus haemolyticus (strain JCSC1435), this protein is Bacilliredoxin SH1401.